We begin with the raw amino-acid sequence, 184 residues long: Ribosome-recycling factor (184 aa).

It belongs to the RRF family.

It is found in the cytoplasm. Responsible for the release of ribosomes from messenger RNA at the termination of protein biosynthesis. May increase the efficiency of translation by recycling ribosomes from one round of translation to another. The protein is Ribosome-recycling factor of Acholeplasma laidlawii (strain PG-8A).